We begin with the raw amino-acid sequence, 402 residues long: Type II NADH:quinone oxidoreductase (402 aa).

Residues 12 to 16 (GAGYA), 39 to 40 (NK), and V83 each bind FAD. E172 is a catalytic residue. FAD contacts are provided by residues D302, 319 to 320 (AQ), and K379.

The protein belongs to the NADH dehydrogenase family. The cofactor is FAD.

The protein resides in the cell membrane. The enzyme catalyses a quinone + NADH + H(+) = a quinol + NAD(+). Its function is as follows. Alternative, nonproton pumping NADH:quinone oxidoreductase that delivers electrons to the respiratory chain by oxidation of NADH and reduction of quinones, and contributes to the regeneration of NAD(+). The sequence is that of Type II NADH:quinone oxidoreductase from Staphylococcus epidermidis (strain ATCC 12228 / FDA PCI 1200).